A 269-amino-acid polypeptide reads, in one-letter code: Zinc transporter ZupT (269 aa).

The next 8 helical transmembrane spans lie at 11–31 (IALAVTLAAGLATAIGSLLVL), 40–60 (LLAFGLAFAGGAMVYVSLSEI), 80–100 (YGTLAFLLGVIVIVLIDHFIP), 125–145 (ALLTSIAITAHNFPEGLATFF), 158–178 (AFAIAIHNIPEGIAIAVPVYF), 187–207 (FSASLLSGLAEPVGAALGYWL), 217–237 (FGWVFGLIAGVMVFLALDELL), and 249–269 (TVYGLVAGMGTLAISLVLFKW). Residues Asn-136 and Glu-139 each coordinate Fe(2+). Zn(2+) is bound by residues Glu-139 and His-164. Asn-165, Glu-168, and Glu-197 together coordinate Fe(2+). Residue Glu-168 participates in Zn(2+) binding.

This sequence belongs to the ZIP transporter (TC 2.A.5) family. ZupT subfamily.

The protein resides in the cell inner membrane. The enzyme catalyses Zn(2+)(in) = Zn(2+)(out). In terms of biological role, mediates zinc uptake. May also transport other divalent cations. The protein is Zinc transporter ZupT of Stenotrophomonas maltophilia (strain R551-3).